We begin with the raw amino-acid sequence, 126 residues long: uncharacterized protein (126 aa).

The N-terminal stretch at 1–23 (MLKKLIMGFFLLILLGIAGVAVM) is a signal peptide.

This is an uncharacterized protein from Archaeoglobus fulgidus (strain ATCC 49558 / DSM 4304 / JCM 9628 / NBRC 100126 / VC-16).